The sequence spans 153 residues: Large ribosomal subunit protein uL13 (153 aa).

Belongs to the universal ribosomal protein uL13 family. Part of the 50S ribosomal subunit.

Its function is as follows. This protein is one of the early assembly proteins of the 50S ribosomal subunit, although it is not seen to bind rRNA by itself. It is important during the early stages of 50S assembly. This Methylobacterium sp. (strain 4-46) protein is Large ribosomal subunit protein uL13.